The sequence spans 829 residues: Leucine--tRNA ligase (829 aa).

Residues 34–44 carry the 'HIGH' region motif; the sequence is PYPSGNIHMGH. The short motif at 591 to 595 is the 'KMSKS' region element; the sequence is KMSKS. Lys-594 contributes to the ATP binding site.

This sequence belongs to the class-I aminoacyl-tRNA synthetase family.

It localises to the cytoplasm. The catalysed reaction is tRNA(Leu) + L-leucine + ATP = L-leucyl-tRNA(Leu) + AMP + diphosphate. The chain is Leucine--tRNA ligase from Ehrlichia canis (strain Jake).